Reading from the N-terminus, the 363-residue chain is 3-dehydroquinate synthase (363 aa).

Residues 75-80 (DAEEGK), 109-113 (GAVTD), 133-134 (TS), Lys-146, Lys-155, and 173-176 (TLQT) contribute to the NAD(+) site. Zn(2+) contacts are provided by Glu-188, His-251, and His-267.

It belongs to the sugar phosphate cyclases superfamily. Dehydroquinate synthase family. It depends on Co(2+) as a cofactor. Zn(2+) is required as a cofactor. The cofactor is NAD(+).

The protein localises to the cytoplasm. The catalysed reaction is 7-phospho-2-dehydro-3-deoxy-D-arabino-heptonate = 3-dehydroquinate + phosphate. The protein operates within metabolic intermediate biosynthesis; chorismate biosynthesis; chorismate from D-erythrose 4-phosphate and phosphoenolpyruvate: step 2/7. Functionally, catalyzes the conversion of 3-deoxy-D-arabino-heptulosonate 7-phosphate (DAHP) to dehydroquinate (DHQ). The protein is 3-dehydroquinate synthase of Paenarthrobacter aurescens (strain TC1).